The primary structure comprises 309 residues: Pyridoxal 5'-phosphate synthase subunit PDX1.3 (309 aa).

The residue at position 1 (M1) is an N-acetylmethionine. D40 serves as a coordination point for D-ribose 5-phosphate. K97 acts as the Schiff-base intermediate with D-ribose 5-phosphate in catalysis. G169 lines the D-ribose 5-phosphate pocket. D-glyceraldehyde 3-phosphate is bound at residue R181. Residues G230 and 251–252 (GS) each bind D-ribose 5-phosphate.

It belongs to the PdxS/SNZ family. Homodimer or heterodimer with PDX1.1 or PDX1.2. Interacts with PDX2. Expressed in cotyledons, rapidly dividing root stele tissues, stems, leaves, flowers, mature pollen, and siliques.

The protein localises to the cytoplasm. It localises to the cell membrane. Its subcellular location is the membrane. The catalysed reaction is aldehydo-D-ribose 5-phosphate + D-glyceraldehyde 3-phosphate + L-glutamine = pyridoxal 5'-phosphate + L-glutamate + phosphate + 3 H2O + H(+). It functions in the pathway cofactor biosynthesis; pyridoxal 5'-phosphate biosynthesis. Catalyzes the formation of pyridoxal 5'-phosphate from ribose 5-phosphate (RBP), glyceraldehyde 3-phosphate (G3P) and ammonia. The ammonia is provided by PDX2. Can also use ribulose 5-phosphate and dihydroxyacetone phosphate as substrates, resulting from enzyme-catalyzed isomerization of RBP and G3P, respectively. Also plays an indirect role in resistance to singlet oxygen-generating photosensitizers. This Arabidopsis thaliana (Mouse-ear cress) protein is Pyridoxal 5'-phosphate synthase subunit PDX1.3 (PDX13).